A 373-amino-acid polypeptide reads, in one-letter code: Filamin-binding LIM protein 1 (373 aa).

Residues 1-70 form a filamin-binding region; sequence MASKPEKRVA…SPWTTPGRAA (70 aa). Disordered stretches follow at residues 41-119 and 135-176; these read RPWE…PSEE and QLHL…PVEK. Residues 104-114 are compositionally biased toward pro residues; the sequence is LPPPPPPPPVL. 3 LIM zinc-binding domains span residues 181-242, 243-300, and 301-370; these read DICA…TLER, CGKC…RKFA, and PVCS…RSAA. The interval 276–373 is FERMT2-binding; sequence IGDESFALGS…HVKRSAAGCC (98 aa).

As to quaternary structure, interacts with NKX2-5. Isoform 1 and isoform 3 interact with FERMT2, FLNA, FLNB and FLNC. Isoform 2 interacts with FLNB. In terms of tissue distribution, isoform 1 and isoform 3 are expressed in heart, kidney, lung, pancreas, placenta and platelets. Isoform 2 is expressed in brain, heart, kidney, lung, pancreas, placenta, skeletal muscle and platelets.

The protein resides in the cell junction. It is found in the focal adhesion. Its subcellular location is the cytoplasm. It localises to the cytoskeleton. The protein localises to the stress fiber. Functionally, serves as an anchoring site for cell-ECM adhesion proteins and filamin-containing actin filaments. Is implicated in cell shape modulation (spreading) and motility. May participate in the regulation of filamin-mediated cross-linking and stabilization of actin filaments. May also regulate the assembly of filamin-containing signaling complexes that control actin assembly. Promotes dissociation of FLNA from ITGB3 and ITGB7. Promotes activation of integrins and regulates integrin-mediated cell-cell adhesion. The chain is Filamin-binding LIM protein 1 (FBLIM1) from Homo sapiens (Human).